Consider the following 247-residue polypeptide: Small ribosomal subunit protein uS3 (247 aa).

The 71-residue stretch at 39–109 (IRSMIRSFPE…KVQIKVKEIK (71 aa)) folds into the KH type-2 domain. A disordered region spans residues 224–247 (RSRRESGQKSDELVRDERTHAERG). Positions 227–247 (RESGQKSDELVRDERTHAERG) are enriched in basic and acidic residues.

The protein belongs to the universal ribosomal protein uS3 family. In terms of assembly, part of the 30S ribosomal subunit. Forms a tight complex with proteins S10 and S14.

In terms of biological role, binds the lower part of the 30S subunit head. Binds mRNA in the 70S ribosome, positioning it for translation. In Treponema pallidum (strain Nichols), this protein is Small ribosomal subunit protein uS3.